A 338-amino-acid polypeptide reads, in one-letter code: D-erythrose-4-phosphate dehydrogenase (338 aa).

Residue 11 to 12 (RI) participates in NAD(+) binding. Residues 153–155 (SCT), Arg199, 212–213 (TK), and Arg235 contribute to the substrate site. Cys154 acts as the Nucleophile in catalysis. Asn317 provides a ligand contact to NAD(+).

The protein belongs to the glyceraldehyde-3-phosphate dehydrogenase family. Epd subfamily. As to quaternary structure, homotetramer.

The protein localises to the cytoplasm. It carries out the reaction D-erythrose 4-phosphate + NAD(+) + H2O = 4-phospho-D-erythronate + NADH + 2 H(+). It functions in the pathway cofactor biosynthesis; pyridoxine 5'-phosphate biosynthesis; pyridoxine 5'-phosphate from D-erythrose 4-phosphate: step 1/5. In terms of biological role, catalyzes the NAD-dependent conversion of D-erythrose 4-phosphate to 4-phosphoerythronate. This Shewanella piezotolerans (strain WP3 / JCM 13877) protein is D-erythrose-4-phosphate dehydrogenase.